The following is a 66-amino-acid chain: Large ribosomal subunit protein bL35 (66 aa).

Residues 1–16 are compositionally biased toward basic residues; that stretch reads MPKQKTHRASAKRFKR. Residues 1 to 21 form a disordered region; the sequence is MPKQKTHRASAKRFKRTGSGG.

It belongs to the bacterial ribosomal protein bL35 family.

The chain is Large ribosomal subunit protein bL35 from Streptococcus agalactiae serotype Ia (strain ATCC 27591 / A909 / CDC SS700).